Consider the following 304-residue polypeptide: D-alanine--D-alanine ligase (304 aa).

One can recognise an ATP-grasp domain in the interval 103–299; it reads KLIWQALGLP…FADLCIEILK (197 aa). 129–184 contributes to the ATP binding site; the sequence is EEKLGLPMFVKPAAEGSSVGVVKVKEKGRLKSVYEELKHLQGEIIAERFIGGGEYS. Residues aspartate 253, glutamate 266, and asparagine 268 each coordinate Mg(2+).

This sequence belongs to the D-alanine--D-alanine ligase family. Mg(2+) serves as cofactor. The cofactor is Mn(2+).

It localises to the cytoplasm. It catalyses the reaction 2 D-alanine + ATP = D-alanyl-D-alanine + ADP + phosphate + H(+). It participates in cell wall biogenesis; peptidoglycan biosynthesis. Functionally, cell wall formation. In Neisseria gonorrhoeae (strain ATCC 700825 / FA 1090), this protein is D-alanine--D-alanine ligase.